The following is a 779-amino-acid chain: Protein phosphatase 1 regulatory subunit 21 (779 aa).

Coiled-coil stretches lie at residues 2–212 (AATA…QAAL) and 556–614 (TESR…ETVQ). Disordered regions lie at residues 85–105 (ETRGKKNKKSAESSSQLSQEQ) and 612–637 (TVQERSVLSNTAEQKEETTEKSQREP). Positions 96-105 (ESSSQLSQEQ) are enriched in low complexity. Basic and acidic residues predominate over residues 624–637 (EQKEETTEKSQREP). Residues 693–739 (AECRALAKRLSLAEKSKESLTEELKLASQSISRLQDELMTTKRSYED) adopt a coiled-coil conformation. The interval 760-779 (EEIDTLKMTSKGNSKKNKTR) is disordered.

In terms of assembly, component of the FERRY complex.

It is found in the early endosome. Its function is as follows. Component of the FERRY complex (Five-subunit Endosomal Rab5 and RNA/ribosome intermediary). The FERRY complex directly interacts with mRNAs and RAB5A, and functions as a RAB5A effector involved in the localization and the distribution of specific mRNAs most likely by mediating their endosomal transport. The complex recruits mRNAs and ribosomes to early endosomes through direct mRNA-interaction. Putative regulator of protein phosphatase 1 (PP1) activity. May play a role in the endosomal sorting process or in endosome maturation pathway. This chain is Protein phosphatase 1 regulatory subunit 21 (PPP1R21), found in Gallus gallus (Chicken).